A 140-amino-acid polypeptide reads, in one-letter code: Profilin-2 (140 aa).

A2 carries the post-translational modification N-acetylalanine.

This sequence belongs to the profilin family. As to quaternary structure, occurs in many kinds of cells as a complex with monomeric actin in a 1:1 ratio. Interacts with PFN2. In terms of assembly, interacts with ACTMAP (via N-terminus); the interaction may facilitate efficient cleavage of the acetylated N-terminus of immature actin by ACTMAP. As to expression, highly expressed in brain, skeletal muscle and kidney and less strongly in heart, placenta, lung and liver.

Its subcellular location is the cytoplasm. It localises to the cytoskeleton. Binds to actin and affects the structure of the cytoskeleton. At high concentrations, profilin prevents the polymerization of actin, whereas it enhances it at low concentrations. By binding to PIP2, it inhibits the formation of IP3 and DG. The chain is Profilin-2 (PFN2) from Homo sapiens (Human).